The chain runs to 177 residues: Peptide methionine sulfoxide reductase MsrA (177 aa).

Cysteine 11 is a catalytic residue.

It belongs to the MsrA Met sulfoxide reductase family.

The catalysed reaction is L-methionyl-[protein] + [thioredoxin]-disulfide + H2O = L-methionyl-(S)-S-oxide-[protein] + [thioredoxin]-dithiol. The enzyme catalyses [thioredoxin]-disulfide + L-methionine + H2O = L-methionine (S)-S-oxide + [thioredoxin]-dithiol. Functionally, has an important function as a repair enzyme for proteins that have been inactivated by oxidation. Catalyzes the reversible oxidation-reduction of methionine sulfoxide in proteins to methionine. The protein is Peptide methionine sulfoxide reductase MsrA of Trichodesmium erythraeum (strain IMS101).